The primary structure comprises 281 residues: Bifunctional protein FolD (281 aa).

NADP(+) is bound by residues 164–166 (GRS) and Ser-189.

This sequence belongs to the tetrahydrofolate dehydrogenase/cyclohydrolase family. In terms of assembly, homodimer.

The enzyme catalyses (6R)-5,10-methylene-5,6,7,8-tetrahydrofolate + NADP(+) = (6R)-5,10-methenyltetrahydrofolate + NADPH. It carries out the reaction (6R)-5,10-methenyltetrahydrofolate + H2O = (6R)-10-formyltetrahydrofolate + H(+). It functions in the pathway one-carbon metabolism; tetrahydrofolate interconversion. In terms of biological role, catalyzes the oxidation of 5,10-methylenetetrahydrofolate to 5,10-methenyltetrahydrofolate and then the hydrolysis of 5,10-methenyltetrahydrofolate to 10-formyltetrahydrofolate. The polypeptide is Bifunctional protein FolD (Enterococcus faecalis (strain ATCC 700802 / V583)).